The sequence spans 243 residues: Carboxy-S-adenosyl-L-methionine synthase (243 aa).

S-adenosyl-L-methionine contacts are provided by residues tyrosine 35, 68-70, 92-93, and arginine 199; these read GCS and DN.

It belongs to the class I-like SAM-binding methyltransferase superfamily. Cx-SAM synthase family. Homodimer.

The catalysed reaction is prephenate + S-adenosyl-L-methionine = carboxy-S-adenosyl-L-methionine + 3-phenylpyruvate + H2O. Its function is as follows. Catalyzes the conversion of S-adenosyl-L-methionine (SAM) to carboxy-S-adenosyl-L-methionine (Cx-SAM). The polypeptide is Carboxy-S-adenosyl-L-methionine synthase (Helicobacter pylori (strain ATCC 700392 / 26695) (Campylobacter pylori)).